Reading from the N-terminus, the 78-residue chain is DNA-directed RNA polymerase subunit Rpo5 (78 aa).

It belongs to the archaeal Rpo5/eukaryotic RPB5 RNA polymerase subunit family. As to quaternary structure, part of the RNA polymerase complex.

It is found in the cytoplasm. It catalyses the reaction RNA(n) + a ribonucleoside 5'-triphosphate = RNA(n+1) + diphosphate. Its function is as follows. DNA-dependent RNA polymerase (RNAP) catalyzes the transcription of DNA into RNA using the four ribonucleoside triphosphates as substrates. The chain is DNA-directed RNA polymerase subunit Rpo5 from Methanocaldococcus jannaschii (strain ATCC 43067 / DSM 2661 / JAL-1 / JCM 10045 / NBRC 100440) (Methanococcus jannaschii).